The chain runs to 420 residues: UDP-N-acetylglucosamine 1-carboxyvinyltransferase (420 aa).

22 to 23 (KN) is a phosphoenolpyruvate binding site. Arg-94 is a binding site for UDP-N-acetyl-alpha-D-glucosamine. Cys-118 serves as the catalytic Proton donor. Cys-118 is subject to 2-(S-cysteinyl)pyruvic acid O-phosphothioketal. UDP-N-acetyl-alpha-D-glucosamine-binding residues include Asp-306 and Ile-328.

The protein belongs to the EPSP synthase family. MurA subfamily.

Its subcellular location is the cytoplasm. It carries out the reaction phosphoenolpyruvate + UDP-N-acetyl-alpha-D-glucosamine = UDP-N-acetyl-3-O-(1-carboxyvinyl)-alpha-D-glucosamine + phosphate. It functions in the pathway cell wall biogenesis; peptidoglycan biosynthesis. In terms of biological role, cell wall formation. Adds enolpyruvyl to UDP-N-acetylglucosamine. The protein is UDP-N-acetylglucosamine 1-carboxyvinyltransferase of Jannaschia sp. (strain CCS1).